The following is a 294-amino-acid chain: 4-hydroxy-tetrahydrodipicolinate synthase (294 aa).

Position 47 (Thr47) interacts with pyruvate. The active-site Proton donor/acceptor is the Tyr135. Lys163 serves as the catalytic Schiff-base intermediate with substrate. Val205 is a pyruvate binding site.

Belongs to the DapA family. In terms of assembly, homotetramer; dimer of dimers.

Its subcellular location is the cytoplasm. The enzyme catalyses L-aspartate 4-semialdehyde + pyruvate = (2S,4S)-4-hydroxy-2,3,4,5-tetrahydrodipicolinate + H2O + H(+). Its pathway is amino-acid biosynthesis; L-lysine biosynthesis via DAP pathway; (S)-tetrahydrodipicolinate from L-aspartate: step 3/4. Its function is as follows. Catalyzes the condensation of (S)-aspartate-beta-semialdehyde [(S)-ASA] and pyruvate to 4-hydroxy-tetrahydrodipicolinate (HTPA). This is 4-hydroxy-tetrahydrodipicolinate synthase from Rickettsia bellii (strain RML369-C).